A 368-amino-acid polypeptide reads, in one-letter code: Probable leucine aminopeptidase ARB_03492 (368 aa).

Positions 1–18 (MKVSAIAAVAALAAVAVA) are cleaved as a signal peptide. Asn-92 is a glycosylation site (N-linked (GlcNAc...) asparagine). Zn(2+) is bound by residues His-172 and Asp-191. Residues Asn-192 and Asn-216 are each glycosylated (N-linked (GlcNAc...) asparagine). Zn(2+) contacts are provided by Glu-230 and Asp-257. A disulfide bond links Cys-301 and Cys-305. His-334 contributes to the Zn(2+) binding site.

Belongs to the peptidase M28 family. M28E subfamily. In terms of assembly, monomer. It depends on Zn(2+) as a cofactor.

It localises to the secreted. Its function is as follows. Probable extracellular aminopeptidase which contributes to pathogenicity. The sequence is that of Probable leucine aminopeptidase ARB_03492 from Arthroderma benhamiae (strain ATCC MYA-4681 / CBS 112371) (Trichophyton mentagrophytes).